Consider the following 593-residue polypeptide: Epidermal growth factor receptor kinase substrate 8-like protein 3 (593 aa).

One can recognise a PTB domain in the interval 28 to 155 (QHRVEHLMTC…ALEEELEQRP (128 aa)). 3 disordered regions span residues 149-171 (EELE…RGPA), 184-239 (LEPG…ERDE), and 374-451 (ADWT…PAQP). S231 is modified (phosphoserine). Polar residues predominate over residues 386 to 401 (PTFSDDWQLPEPSSQA). Positions 425 to 435 (PQEKTHNHDPQ) are enriched in basic and acidic residues. One can recognise an SH3 domain in the interval 450 to 509 (QPALKMQVLYEFEARNPRELTVVQGEKLEVLDHSKRWWLVKNEAGRSGYIPSNILEPLQP).

The protein belongs to the EPS8 family. In terms of assembly, interacts with ABI1. Part of a complex that contains SOS1, ABI1 and EPS8L2. Interacts with FASLG.

The protein resides in the cytoplasm. This chain is Epidermal growth factor receptor kinase substrate 8-like protein 3 (EPS8L3), found in Homo sapiens (Human).